The chain runs to 274 residues: Type II restriction enzyme XamI (274 aa).

It carries out the reaction Endonucleolytic cleavage of DNA to give specific double-stranded fragments with terminal 5'-phosphates.. Functionally, a P subtype restriction enzyme that recognizes the double-stranded sequence 5'-GTCGAC-3' and cleaves after G-1. The polypeptide is Type II restriction enzyme XamI (xamIR) (Xanthomonas campestris pv. amaranthicola).